The following is a 102-amino-acid chain: Co-chaperonin GroES (102 aa).

This sequence belongs to the GroES chaperonin family. Heptamer of 7 subunits arranged in a ring. Interacts with the chaperonin GroEL.

The protein localises to the cytoplasm. Functionally, together with the chaperonin GroEL, plays an essential role in assisting protein folding. The GroEL-GroES system forms a nano-cage that allows encapsulation of the non-native substrate proteins and provides a physical environment optimized to promote and accelerate protein folding. GroES binds to the apical surface of the GroEL ring, thereby capping the opening of the GroEL channel. The protein is Co-chaperonin GroES of Streptomyces avermitilis (strain ATCC 31267 / DSM 46492 / JCM 5070 / NBRC 14893 / NCIMB 12804 / NRRL 8165 / MA-4680).